Reading from the N-terminus, the 556-residue chain is Probable glucomannan 4-beta-mannosyltransferase 3 (556 aa).

Residues 56–76 traverse the membrane as a helical segment; it reads IFVFIPILKCLVTICLVMSLL. The active site involves Asp-159. The substrate site is built by Asp-218 and Asp-220. Asp-312 is a catalytic residue. 4 helical membrane passes run 391–411, 428–448, 509–529, and 530–550; these read IVVH…TVLF, ITIL…FWIL, LVVG…GGSY, and FYVY…GYIG.

It belongs to the glycosyltransferase 2 family. Plant cellulose synthase-like A subfamily.

The protein resides in the golgi apparatus membrane. It carries out the reaction GDP-mannose + (glucomannan)n = GDP + (glucomannan)n+1.. In terms of biological role, probable mannan synthase which consists of a 4-beta-mannosyltransferase activity on mannan using GDP-mannose. The beta-1,4-mannan product is the backbone for galactomannan synthesis by galactomannan galactosyltransferase. Galactomannan is a noncellulosic polysaccharides of plant cell wall. The chain is Probable glucomannan 4-beta-mannosyltransferase 3 from Arabidopsis thaliana (Mouse-ear cress).